The chain runs to 323 residues: PTS system mannose-specific EIIAB component (323 aa).

The region spanning 2–124 (TIAIVIGTHG…VALAVETGRE (123 aa)) is the PTS EIIA type-4 domain. Residue H10 is the Tele-phosphohistidine intermediate; for EIIA activity of the active site. H10 is subject to Phosphohistidine; by HPr. At K55 the chain carries N6-acetyllysine. A hinge region spans residues 137 to 155 (AAPAPAAAAPKAAPTPAKP). The region spanning 157–320 (GPNDYMVIGL…KLKMMDLISK (164 aa)) is the PTS EIIB type-4 domain. Catalysis depends on H175, which acts as the Pros-phosphohistidine intermediate; for EIIB activity. H175 carries the phosphohistidine; by EIIA modification. An N6-acetyllysine modification is found at K234.

Homodimer.

Its subcellular location is the cytoplasm. The protein localises to the cell inner membrane. It catalyses the reaction D-mannose(out) + N(pros)-phospho-L-histidyl-[protein] = D-mannose 6-phosphate(in) + L-histidyl-[protein]. In terms of biological role, the phosphoenolpyruvate-dependent sugar phosphotransferase system (sugar PTS), a major carbohydrate active transport system, catalyzes the phosphorylation of incoming sugar substrates concomitantly with their translocation across the cell membrane. The enzyme II ManXYZ PTS system is involved in mannose transport. The chain is PTS system mannose-specific EIIAB component (manX) from Escherichia coli O157:H7.